We begin with the raw amino-acid sequence, 197 residues long: ATP-dependent Clp protease proteolytic subunit 3 (197 aa).

The active-site Nucleophile is Ser96. His121 is an active-site residue.

It belongs to the peptidase S14 family. As to quaternary structure, fourteen ClpP subunits assemble into 2 heptameric rings which stack back to back to give a disk-like structure with a central cavity, resembling the structure of eukaryotic proteasomes.

It localises to the cytoplasm. It catalyses the reaction Hydrolysis of proteins to small peptides in the presence of ATP and magnesium. alpha-casein is the usual test substrate. In the absence of ATP, only oligopeptides shorter than five residues are hydrolyzed (such as succinyl-Leu-Tyr-|-NHMec, and Leu-Tyr-Leu-|-Tyr-Trp, in which cleavage of the -Tyr-|-Leu- and -Tyr-|-Trp bonds also occurs).. Cleaves peptides in various proteins in a process that requires ATP hydrolysis. Has a chymotrypsin-like activity. Plays a major role in the degradation of misfolded proteins. This chain is ATP-dependent Clp protease proteolytic subunit 3, found in Prochlorococcus marinus (strain MIT 9313).